Here is a 621-residue protein sequence, read N- to C-terminus: 1-deoxy-D-xylulose-5-phosphate synthase (621 aa).

Thiamine diphosphate-binding positions include H80 and 121–123 (GHS). Mg(2+) is bound at residue D152. Thiamine diphosphate contacts are provided by residues 153-154 (GA), N181, Y288, and E370. Position 181 (N181) interacts with Mg(2+).

Belongs to the transketolase family. DXPS subfamily. As to quaternary structure, homodimer. Mg(2+) serves as cofactor. The cofactor is thiamine diphosphate.

It catalyses the reaction D-glyceraldehyde 3-phosphate + pyruvate + H(+) = 1-deoxy-D-xylulose 5-phosphate + CO2. The protein operates within metabolic intermediate biosynthesis; 1-deoxy-D-xylulose 5-phosphate biosynthesis; 1-deoxy-D-xylulose 5-phosphate from D-glyceraldehyde 3-phosphate and pyruvate: step 1/1. In terms of biological role, catalyzes the acyloin condensation reaction between C atoms 2 and 3 of pyruvate and glyceraldehyde 3-phosphate to yield 1-deoxy-D-xylulose-5-phosphate (DXP). This chain is 1-deoxy-D-xylulose-5-phosphate synthase, found in Shewanella woodyi (strain ATCC 51908 / MS32).